An 82-amino-acid polypeptide reads, in one-letter code: Protein transport protein Sec61 subunit beta (82 aa).

The residue at position 1 (M1) is an N-acetylmethionine. The disordered stretch occupies residues 1-34 (MVGSGAPQRGSAAATASMRRRKPTSGAGGGGASG). At 1–55 (MVGSGAPQRGSAAATASMRRRKPTSGAGGGGASGGAAGSMLQFYTDDAPGLKISP) the chain is on the cytoplasmic side. A helical membrane pass occupies residues 56–76 (NVVLIMSIGFIAFVAVLHVMG).

Belongs to the SEC61-beta family. Heterotrimeric complex composed of SEC61-alpha, SEC61-beta and SEC61-gamma.

Its subcellular location is the endoplasmic reticulum membrane. In terms of biological role, necessary for protein translocation in the endoplasmic reticulum. This chain is Protein transport protein Sec61 subunit beta, found in Arabidopsis thaliana (Mouse-ear cress).